A 451-amino-acid chain; its full sequence is Phosphoglucosamine mutase (451 aa).

Residue Ser-107 is the Phosphoserine intermediate of the active site. Positions 107, 246, 248, and 250 each coordinate Mg(2+). At Ser-107 the chain carries Phosphoserine.

The protein belongs to the phosphohexose mutase family. It depends on Mg(2+) as a cofactor. Activated by phosphorylation.

The enzyme catalyses alpha-D-glucosamine 1-phosphate = D-glucosamine 6-phosphate. Its function is as follows. Catalyzes the conversion of glucosamine-6-phosphate to glucosamine-1-phosphate. This Burkholderia cenocepacia (strain HI2424) protein is Phosphoglucosamine mutase.